The following is a 345-amino-acid chain: D-amino-acid oxidase (345 aa).

Ser-10, Ile-13, Ser-49, Gly-53, and Asn-55 together coordinate FAD. 2 residues coordinate (R)-lactate: Tyr-230 and Arg-290. Tyr-230 and Arg-290 together coordinate anthranilate. FAD is bound by residues Arg-290, Ser-317, Gly-320, Tyr-321, and Gln-322. The Microbody targeting signal signature appears at 343-345 (AKL).

This sequence belongs to the DAMOX/DASOX family. FAD serves as cofactor.

It localises to the peroxisome matrix. The enzyme catalyses a D-alpha-amino acid + O2 + H2O = a 2-oxocarboxylate + H2O2 + NH4(+). It catalyses the reaction D-methionine + O2 + H2O = 4-methylsulfanyl-2-oxobutanoate + H2O2 + NH4(+). In terms of biological role, catalyzes the oxidative deamination of D-amino acids with broad substrate specificity. Enables the organism to utilize D-amino acids as a source of nutrients. Enables the organism to utilize D-alanine as a nitrogen source, although it is not strictly required for this process. Also enables utilization of D-alanine as a carbon source. This is D-amino-acid oxidase from Candida boidinii (Yeast).